The sequence spans 528 residues: Glutamyl-tRNA(Gln) amidotransferase subunit B, mitochondrial (528 aa).

Belongs to the GatB/GatE family. GatB subfamily. As to quaternary structure, subunit of the heterotrimeric GatFAB amidotransferase (AdT) complex, composed of A, B and F subunits.

It localises to the mitochondrion. It carries out the reaction L-glutamyl-tRNA(Gln) + L-glutamine + ATP + H2O = L-glutaminyl-tRNA(Gln) + L-glutamate + ADP + phosphate + H(+). In terms of biological role, allows the formation of correctly charged Gln-tRNA(Gln) through the transamidation of misacylated Glu-tRNA(Gln) in the mitochondria. The reaction takes place in the presence of glutamine and ATP through an activated gamma-phospho-Glu-tRNA(Gln). The sequence is that of Glutamyl-tRNA(Gln) amidotransferase subunit B, mitochondrial from Clavispora lusitaniae (strain ATCC 42720) (Yeast).